Reading from the N-terminus, the 329-residue chain is NADH-quinone oxidoreductase subunit H (329 aa).

8 consecutive transmembrane segments (helical) span residues 9 to 29 (ILKVLVVVAIFSALAGFLTYV), 79 to 99 (IAPVISAATAFIAMSAVPFFP), 117 to 137 (VGILFVLGVGAVGMYGPLLAG), 162 to 182 (VSGLSILAPLMMVGSLSLIEI), 188 to 208 (GGIFDWLVWSQPLAFLLFLIA), 243 to 263 (FFIGEYANMITLAFLVVLLFF), 269 to 289 (LWFIPGGIAILLKVAVFLFLF), and 309 to 329 (WKVLMPLALLNIVLTGIVLIL).

The protein belongs to the complex I subunit 1 family. In terms of assembly, NDH-1 is composed of 14 different subunits. Subunits NuoA, H, J, K, L, M, N constitute the membrane sector of the complex.

It localises to the cell inner membrane. The enzyme catalyses a quinone + NADH + 5 H(+)(in) = a quinol + NAD(+) + 4 H(+)(out). Functionally, NDH-1 shuttles electrons from NADH, via FMN and iron-sulfur (Fe-S) centers, to quinones in the respiratory chain. The immediate electron acceptor for the enzyme in this species is believed to be ubiquinone. Couples the redox reaction to proton translocation (for every two electrons transferred, four hydrogen ions are translocated across the cytoplasmic membrane), and thus conserves the redox energy in a proton gradient. This subunit may bind ubiquinone. The chain is NADH-quinone oxidoreductase subunit H from Wolinella succinogenes (strain ATCC 29543 / DSM 1740 / CCUG 13145 / JCM 31913 / LMG 7466 / NCTC 11488 / FDC 602W) (Vibrio succinogenes).